The following is a 536-amino-acid chain: Lariat debranching enzyme (536 aa).

A divalent metal cation-binding residues include Cys-8, His-10, Asp-39, and Asn-84. A lariat recognition loop region spans residues 124 to 154; sequence SGIFKSHDYRKGHFECPPYNQQTIRSAYHVR. Residues His-174, His-226, and His-228 each coordinate a divalent metal cation. Positions 388–536 are disordered; that stretch reads EEGSVRGEYE…YAAEDEDEAK (149 aa). The span at 414–426 shows a compositional bias: polar residues; the sequence is EYNTDNSGLSSIN. Residues 430–441 show a composition bias toward acidic residues; sequence IMLDDEGGDEDL. The span at 484–504 shows a compositional bias: basic and acidic residues; the sequence is ELEKSGVNKQVEEKSLNERPL.

The protein belongs to the lariat debranching enzyme family. Requires Fe(2+) as cofactor. The cofactor is Zn(2+). Mn(2+) serves as cofactor.

It localises to the nucleus. With respect to regulation, active in presence of diverse metals including Fe(2+), Zn(2+), Mn(2+). Also activated by Ca(2+). Binds two metal cations in two adjacent alpha and beta metal-binding pockets. Cleaves the 2'-5' phosphodiester linkage at the branch point of excised lariat intron RNA and converts them into linear molecules that can be subsequently degraded, thereby facilitating ribonucleotide turnover. Linked to its role in pre-mRNA processing mechanism, may also participate in retrovirus replication and have an antiviral cell-intrinsic defense function. This is Lariat debranching enzyme (DBR1) from Gallus gallus (Chicken).